A 404-amino-acid polypeptide reads, in one-letter code: Cytoplasmic tRNA 2-thiolation protein 2 (404 aa).

The protein belongs to the CTU2/NCS2 family.

It localises to the cytoplasm. The protein operates within tRNA modification; 5-methoxycarbonylmethyl-2-thiouridine-tRNA biosynthesis. Plays a central role in 2-thiolation of mcm(5)S(2)U at tRNA wobble positions of tRNA(Lys), tRNA(Glu) and tRNA(Gln). May act by forming a heterodimer with NCS6/CTU1 that ligates sulfur from thiocarboxylated URM1 onto the uridine of tRNAs at wobble position. The sequence is that of Cytoplasmic tRNA 2-thiolation protein 2 from Drosophila mojavensis (Fruit fly).